The following is a 372-amino-acid chain: Probable basic-leucine zipper transcription factor G (372 aa).

2 disordered regions span residues 1–20 (MLSV…QQQQ) and 176–234 (TTNN…EKFE). Low complexity-rich tracts occupy residues 11 to 20 (QQPQQQQQQQ) and 176 to 215 (TTNN…KSNT). Positions 223-234 (IRNSNSTFEKFE) are enriched in polar residues. The region spanning 277–340 (ELKRQKRLIK…LILKAEVGQL (64 aa)) is the bZIP domain. The basic motif stretch occupies residues 279 to 301 (KRQKRLIKNRESAHLSRQRKRER). The leucine-zipper stretch occupies residues 305–340 (LEHRVEELSSNSIDINKTLSSLENENLILKAEVGQL).

It belongs to the bZIP family.

It localises to the nucleus. In terms of biological role, probable transcriptional regulator. The polypeptide is Probable basic-leucine zipper transcription factor G (bzpG) (Dictyostelium discoideum (Social amoeba)).